The following is a 487-amino-acid chain: b(0,+)-type amino acid transporter 1 (487 aa).

Positions methionine 1–glutamate 20 are disordered. At methionine 1 to glycine 31 the chain is on the cytoplasmic side. At serine 18 the chain carries Phosphoserine. Residues leucine 32–valine 55 form a helical membrane-spanning segment. Residue isoleucine 43 to glycine 47 coordinates L-arginine. Topologically, residues leucine 56–valine 62 are extracellular. Residues glycine 63 to alanine 84 form a helical membrane-spanning segment. Residues glutamate 85–tyrosine 110 are Cytoplasmic-facing. Residues leucine 111–cysteine 137 traverse the membrane as a helical segment. Residues alanine 138–proline 147 are Extracellular-facing. 2 consecutive transmembrane segments (helical) span residues alanine 148 to serine 169 and valine 170 to isoleucine 193. Topologically, residues serine 194–serine 217 are extracellular. The chain crosses the membrane as a helical span at residues valine 218–leucine 238. Position 233 (aspartate 233) interacts with L-arginine. At asparagine 239 to asparagine 251 the chain is on the cytoplasmic side. A helical transmembrane segment spans residues leucine 252–tyrosine 274. Over phenylalanine 275–serine 302 the chain is Extracellular. The helical transmembrane segment at tryptophan 303 to glycine 325 threads the bilayer. The Cytoplasmic segment spans residues arginine 326–proline 351. The next 2 membrane-spanning stretches (helical) occupy residues alanine 352–aspartate 370 and isoleucine 371–leucine 391. Residues glycine 392–proline 410 are Cytoplasmic-facing. Residues leucine 411–serine 431 traverse the membrane as a helical segment. Topologically, residues glutamate 432–alanine 434 are extracellular. Residues tryptophan 435–phenylalanine 450 traverse the membrane as a helical segment. Over tyrosine 451–glutamate 487 the chain is Cytoplasmic.

It belongs to the amino acid-polyamine-organocation (APC) superfamily. Disulfide-linked heterodimer composed of the catalytic light chain subunit SLC7A9 and the heavy chain subunit SLC3A1. The heterodimer is the minimal functional unit. Assembles in heterotetramers (dimers of heterodimers) and higher order oligomers; the oligomerization is mediated by SLC3A1 likely to prevent degradation and facilitate heteromer trafficking to the plasma membrane. Interacts with CAV1. Expressed in the brush border membrane in the kidney (at protein level).

It localises to the apical cell membrane. The catalysed reaction is L-leucine(out) + L-arginine(in) = L-leucine(in) + L-arginine(out). The enzyme catalyses L-histidine(out) + L-arginine(in) = L-histidine(in) + L-arginine(out). It carries out the reaction L-arginine(in) + L-phenylalanine(out) = L-arginine(out) + L-phenylalanine(in). It catalyses the reaction L-cysteine(out) + L-arginine(in) = L-cysteine(in) + L-arginine(out). The catalysed reaction is L-cystine(out) + L-arginine(in) = L-cystine(in) + L-arginine(out). The enzyme catalyses L-lysine(out) + L-arginine(in) = L-lysine(in) + L-arginine(out). Functionally, associates with SLC3A1 to form a functional transporter complex that mediates the electrogenic exchange between cationic amino acids and neutral amino acids, with a stoichiometry of 1:1. Has system b(0,+)-like activity with high affinity for extracellular cationic amino acids and L-cystine and lower affinity for intracellular neutral amino acids. Substrate exchange is driven by high concentration of intracellular neutral amino acids and the intracellular reduction of L-cystine to L-cysteine. Required for reabsorption of L-cystine and dibasic amino acids across the brush border membrane in renal proximal tubules. This is b(0,+)-type amino acid transporter 1 (Slc7a9) from Mus musculus (Mouse).